The sequence spans 181 residues: Mating-type M-specific polypeptide Mc (181 aa).

The HMG box DNA-binding region spans Thr-103–Lys-171.

It localises to the nucleus. Its subcellular location is the cytoplasm. The protein resides in the cytoskeleton. It is found in the microtubule organizing center. The protein localises to the spindle pole body. Mating type proteins are sequence specific DNA-binding proteins that act as master switches in yeast differentiation by controlling gene expression in a cell type-specific fashion. Positive regulator of MFM genes. The HMG box recognizes the DNA sequence 5'-AACAAAG-3'. Required for conjugation and efficient meiosis. This Schizosaccharomyces pombe (Fission yeast) protein is Mating-type M-specific polypeptide Mc (mat3-Mc).